Consider the following 258-residue polypeptide: UPF0246 protein VV0659 (258 aa).

Belongs to the UPF0246 family.

This is UPF0246 protein VV0659 from Vibrio vulnificus (strain YJ016).